Here is a 246-residue protein sequence, read N- to C-terminus: Histone H1 (246 aa).

Disordered regions lie at residues 1 to 51 (MATD…PTHL) and 105 to 246 (GGKL…KAKK). Low complexity predominate over residues 9–34 (PAPLVDAAPEAPADAPAAPAADANAA). A compositionally biased stretch (basic residues) spans 35-47 (KAKKATAPKKRAS). One can recognise an H15 domain in the interval 49-119 (THLPYAEMVS…KVKNSYKLSS (71 aa)). Composition is skewed to basic residues over residues 129–189 (AAPK…KAKP) and 198–208 (PLAKKAGRAKA). A compositionally biased stretch (low complexity) spans 224–235 (KKAAPSKKAATP).

It belongs to the histone H1/H5 family.

It is found in the nucleus. It localises to the chromosome. Its function is as follows. Histones H1 are necessary for the condensation of nucleosome chains into higher-order structures. This is Histone H1 from Zea mays (Maize).